The sequence spans 410 residues: Benzene 1,2-dioxygenase system ferredoxin--NAD(+) reductase subunit (410 aa).

4–35 is a binding site for FAD; sequence HVAIIGNGVAGFTTAQALRAEGYEGRISLIGE. An NAD(+)-binding site is contributed by 145–173; sequence RLLIVGGGLIGCEVATTARKLGLSVTILE.

It belongs to the bacterial ring-hydroxylating dioxygenase ferredoxin reductase family. In terms of assembly, this dioxygenase system consists of four proteins: the two subunits of the hydroxylase component (BedC1 and BedC2), a ferredoxin (BedB) and a ferredoxin reductase (BedA). Requires FAD as cofactor.

The enzyme catalyses 2 reduced [2Fe-2S]-[ferredoxin] + NAD(+) + H(+) = 2 oxidized [2Fe-2S]-[ferredoxin] + NADH. It participates in aromatic compound metabolism; benzene degradation; catechol from benzene: step 1/2. Its function is as follows. Part of the electron transfer component of benzene 1,2-dioxygenase, transfers electrons from ferredoxin to NADH. The protein is Benzene 1,2-dioxygenase system ferredoxin--NAD(+) reductase subunit (bedA) of Pseudomonas putida (Arthrobacter siderocapsulatus).